A 93-amino-acid chain; its full sequence is Co-chaperonin GroES 2 (93 aa).

The disordered stretch occupies residues Met-1–Ala-20.

This sequence belongs to the GroES chaperonin family. Heptamer of 7 subunits arranged in a ring. Interacts with the chaperonin GroEL.

The protein localises to the cytoplasm. Its function is as follows. Together with the chaperonin GroEL, plays an essential role in assisting protein folding. The GroEL-GroES system forms a nano-cage that allows encapsulation of the non-native substrate proteins and provides a physical environment optimized to promote and accelerate protein folding. GroES binds to the apical surface of the GroEL ring, thereby capping the opening of the GroEL channel. The polypeptide is Co-chaperonin GroES 2 (Rhodopirellula baltica (strain DSM 10527 / NCIMB 13988 / SH1)).